The primary structure comprises 147 residues: Ribosome maturation factor RimP (147 aa).

Belongs to the RimP family.

Its subcellular location is the cytoplasm. Functionally, required for maturation of 30S ribosomal subunits. This chain is Ribosome maturation factor RimP, found in Legionella pneumophila (strain Paris).